A 466-amino-acid polypeptide reads, in one-letter code: MARFFKPQKRKITDTKHKEIVINRLDHLGAGIGHLNNKSIFVDGLLPGEKALVQITDDKKQYARAKVIKRLIDSPARIKPHCPIYDQCGGCNLQHLSHQGQVLAKQQALSDLMVKFAGDQQVAVDKQRAGDQQRALFEQVTPIIAAEHHYRRCARFSVLLGKDGQLQFGLRKKQSKDIVNVKQCPVLAESLNELLPPLRSLLSTLKGQRHLGHIELIEADNGRVVLIRHLKPFSDKDMTLILNFAQEQNVILFLAPTSDDIELIHGETPYYRLDDLTLHFSPKDFIQVNRDVNKKMVEQATDWLDLQPSDRVLDLFCGLGNFSLPLAKHAKAVVGVEGIDEMVHRATENAMCNKQNNATFYQANLDEDVTKLAWAREPFNKILLDPARAGAAGVMEHVVKLKPERVVYVSCNPATLARDSQVLLKKGYQLERLGMLDMFPQTGHLESMALFVKAKAVKKKRVVTKL.

The 59-residue stretch at 11-69 folds into the TRAM domain; sequence KITDTKHKEIVINRLDHLGAGIGHLNNKSIFVDGLLPGEKALVQITDDKKQYARAKVIK. [4Fe-4S] cluster contacts are provided by C82, C88, C91, and C184. Residues Q287, F316, N321, E337, N364, and D385 each contribute to the S-adenosyl-L-methionine site. Catalysis depends on C411, which acts as the Nucleophile.

Belongs to the class I-like SAM-binding methyltransferase superfamily. RNA M5U methyltransferase family. RlmD subfamily.

It carries out the reaction uridine(1939) in 23S rRNA + S-adenosyl-L-methionine = 5-methyluridine(1939) in 23S rRNA + S-adenosyl-L-homocysteine + H(+). In terms of biological role, catalyzes the formation of 5-methyl-uridine at position 1939 (m5U1939) in 23S rRNA. In Photobacterium profundum (strain SS9), this protein is 23S rRNA (uracil(1939)-C(5))-methyltransferase RlmD.